Consider the following 520-residue polypeptide: Cytochrome P450 72A68 (520 aa).

Residues Ile-11 to Trp-31 form a helical membrane-spanning segment. Cys-466 is a binding site for heme.

The protein belongs to the cytochrome P450 family. It depends on heme as a cofactor.

It is found in the membrane. The catalysed reaction is oleanolate + 3 reduced [NADPH--hemoprotein reductase] + 3 O2 = gypsogenate + 3 oxidized [NADPH--hemoprotein reductase] + 4 H2O + 4 H(+). Functionally, catalyzes the carboxylation of oleanolic acid at the C-23 position to form gypsogenic acid. Involved in the hemolytic saponin biosynthetic pathway. This Medicago truncatula (Barrel medic) protein is Cytochrome P450 72A68.